Here is a 232-residue protein sequence, read N- to C-terminus: 5'-methylthioadenosine/S-adenosylhomocysteine nucleosidase (232 aa).

Glutamate 12 (proton acceptor) is an active-site residue. Substrate is bound by residues glycine 78, isoleucine 152, and 173–174 (ME). The Proton donor role is filled by aspartate 197.

Belongs to the PNP/UDP phosphorylase family. MtnN subfamily. In terms of assembly, homodimer.

It catalyses the reaction S-adenosyl-L-homocysteine + H2O = S-(5-deoxy-D-ribos-5-yl)-L-homocysteine + adenine. The catalysed reaction is S-methyl-5'-thioadenosine + H2O = 5-(methylsulfanyl)-D-ribose + adenine. The enzyme catalyses 5'-deoxyadenosine + H2O = 5-deoxy-D-ribose + adenine. It participates in amino-acid biosynthesis; L-methionine biosynthesis via salvage pathway; S-methyl-5-thio-alpha-D-ribose 1-phosphate from S-methyl-5'-thioadenosine (hydrolase route): step 1/2. In terms of biological role, catalyzes the irreversible cleavage of the glycosidic bond in both 5'-methylthioadenosine (MTA) and S-adenosylhomocysteine (SAH/AdoHcy) to adenine and the corresponding thioribose, 5'-methylthioribose and S-ribosylhomocysteine, respectively. Also cleaves 5'-deoxyadenosine, a toxic by-product of radical S-adenosylmethionine (SAM) enzymes, into 5-deoxyribose and adenine. Thus, is required for in vivo function of the radical SAM enzymes biotin synthase and lipoic acid synthase, that are inhibited by 5'-deoxyadenosine accumulation. The chain is 5'-methylthioadenosine/S-adenosylhomocysteine nucleosidase from Salmonella choleraesuis (strain SC-B67).